The sequence spans 75 residues: Large ribosomal subunit protein uL29 (75 aa).

The protein belongs to the universal ribosomal protein uL29 family.

The polypeptide is Large ribosomal subunit protein uL29 (Ureaplasma urealyticum serovar 10 (strain ATCC 33699 / Western)).